A 199-amino-acid polypeptide reads, in one-letter code: Interleukin-11 (199 aa).

The N-terminal stretch at 1–21 (MNCVCRLVLVVLSLWPDTAVA) is a signal peptide. The interval 182–190 (HLTLDWAVR) is important for interaction with IL11RA and for the stimulation of cell proliferation.

This sequence belongs to the IL-6 superfamily. In terms of assembly, interacts with IL11RA to associate with IL6ST, giving rise to a multimeric signaling complex.

It is found in the secreted. Functionally, cytokine that stimulates the proliferation of hematopoietic stem cells and megakaryocyte progenitor cells and induces megakaryocyte maturation resulting in increased platelet production. Also promotes the proliferation of hepatocytes in response to liver damage. Binding to its receptor formed by IL6ST and IL11RA activates a signaling cascade that promotes cell proliferation. Signaling leads to the activation of intracellular protein kinases and the phosphorylation of STAT3. The interaction with the membrane-bound IL11RA and IL6ST stimulates 'classic signaling', whereas the binding of IL11 and soluble IL11RA to IL6ST stimulates 'trans-signaling'. This is Interleukin-11 from Homo sapiens (Human).